Reading from the N-terminus, the 53-residue chain is Lantibiotic paenibacillin (53 aa).

A propeptide spanning residues 1 to 24 (MKVDQMFDLDLRKSYEASELSPQA) is cleaved from the precursor. At alanine 24 the chain carries N-acetylalanine. Position 25 is a 2,3-didehydroalanine (Ser) (serine 25). 2,3-didehydrobutyrine is present on residues threonine 29 and threonine 30. A cross-link (lanthionine (Ser-Cys)) is located at residues 34–38 (SKAVC). Cross-links (beta-methyllanthionine (Thr-Cys)) lie at residues 40–43 (TLTC), 42–45 (TCIC), and 46–49 (TGSC). Residues 48–52 (SCSNC) constitute a cross-link (lanthionine (Ser-Cys)). At serine 50 the chain carries 2,3-didehydroalanine (Ser).

Maturation of lantibiotics involves the enzymatic conversion of Thr, and Ser into dehydrated AA and the formation of thioether bonds with cysteine. This is followed by membrane translocation and cleavage of the modified precursor. Post-translationally, the structure of the 2,3-didehydrobutyrines is not discussed in PubMed:17071789.

Its subcellular location is the secreted. Lanthionine-containing peptide antibiotic (lantibiotic) active on Gram-positive bacteria. The bactericidal activity of lantibiotics is based on depolarization of energized bacterial cytoplasmic membranes, initiated by the formation of aqueous transmembrane pores. Lacks antibacterial activity against Gram-negative bacteria. The protein is Lantibiotic paenibacillin of Paenibacillus polymyxa (Bacillus polymyxa).